The following is a 314-amino-acid chain: DDRGK domain-containing protein 1 (314 aa).

The helical transmembrane segment at 1-28 threads the bilayer; that stretch reads MVAPVWYLVAAALLVGFILFLTRSRGRA. Residues 1–114 form a mediates interaction with CDK5RAP3 region; it reads MVAPVWYLVA…VEKPAETHLS (114 aa). The Cytoplasmic segment spans residues 29–314; that stretch reads ASAGQEPLHN…GRESPAQAPA (286 aa). Disordered regions lie at residues 31 to 75 and 100 to 186; these read AGQE…SRLQ and QEEE…QREH. A phosphoserine mark is found at serine 72 and serine 114. The interval 118–216 is mediates interaction with TRIP4; that stretch reads GAKKLRKLEE…MTEEQSQSFL (99 aa). A compositionally biased stretch (basic and acidic residues) spans 124–186; that stretch reads KLEEKQARKA…AREEQAQREH (63 aa). A UFM1-interacting motif (UFIM) motif is present at residues 195-209; sequence AFVVEEEGVGETMTE. Positions 216 to 314 are mediates interaction with UFL1; that stretch reads LTEFINYIKQ…GRESPAQAPA (99 aa). Residues 229–273 form the PCI domain; sequence VLLEDLASQVGLRTQDTINRIQDLLAEGTITGVIDDRGKFIYITP. Lysine 267 participates in a covalent cross-link: Glycyl lysine isopeptide (Lys-Gly) (interchain with G-Cter in UFM1).

Belongs to the DDRGK1 family. Component of the UFM1 ribosome E3 ligase (UREL) complex, composed of UFL1, DDRGK1 and CDK5RAP3. Interacts with (unphosphorylated) ERN1/IRE1-alpha; interaction is dependent on UFM1 and takes place in response to endoplasmic reticulum stress, regulating ERN1/IRE1-alpha stability. Interacts with NFKBIA. Interacts with SOX9. In terms of processing, ubiquitinated. Ubiquitination probably triggers proteasomal degradation and is negatively regulated by UFL1, the enzyme involved in the ufmylation of DDRGK1. Ufmylated; conjugated to ubiquitin-like protein UFM1, probably at Lys-267 by UFL1. The relevance of ufmylation is however unclear: as DDRGK1 acts as a substrate adapters for ufmylation, it is uncertain whether ufmylation is a collateral effect of ufmylation process or is required to regulate its activity. Widely expressed (at protein level). In the brain, highest levels in medulla oblongata, followed by cerebral cortex, cerebellum and frontal lobe.

The protein localises to the endoplasmic reticulum membrane. Functionally, component of the UFM1 ribosome E3 ligase (UREL) complex, a multiprotein complex that catalyzes ufmylation of endoplasmic reticulum-docked proteins. The UREL complex plays a key role in ribosome recycling by mediating mono-ufmylation of the RPL26/uL24 subunit of the 60S ribosome following ribosome dissociation: ufmylation weakens the junction between post-termination 60S subunits and SEC61 translocons, promoting release and recycling of the large ribosomal subunit from the endoplasmic reticulum membrane. Ufmylation of RPL26/uL24 and subsequent 60S ribosome recycling either take place after normal termination of translation or after ribosome stalling during cotranslational translocation at the endoplasmic reticulum. Within the UREL complex, DDRGK1 tethers the complex to the endoplasmic reticulum membrane to restrict its activity to endoplasmic reticulum-docked ribosomes and acts as an ufmylation 'reader': following RPL26/uL24 ufmylation, DDRGK1 specifically binds to ufmylated RPL26/uL24 via its UFIM motif, resulting in stable association between the 60S ribosome and the UREL complex, followed by dissociation of the 60S ribosome subunit from the endoplasmic reticulum membrane. The UREL complex is also involved in reticulophagy in response to endoplasmic reticulum stress by promoting ufmylation of proteins such as CYB5R3 and RPN1, thereby promoting lysosomal degradation of ufmylated proteins. Ufmylation-dependent reticulophagy inhibits the unfolded protein response (UPR) by regulating ERN1/IRE1-alpha stability. Acts as a regulator of immunity by promoting differentiation of B-cells into plasma cells: acts by promoting expansion of the endoplasmic reticulum and regulating the unfolded protein response (UPR). May also be required for TRIP4 ufmylation. May play a role in NF-kappa-B-mediated transcription through regulation of the phosphorylation and the degradation of NFKBIA, the inhibitor of NF-kappa-B. Plays a role in cartilage development through SOX9, inhibiting the ubiquitin-mediated proteasomal degradation of this transcriptional regulator. Required for stabilization and ufmylation of ATG9A. The protein is DDRGK domain-containing protein 1 of Homo sapiens (Human).